A 459-amino-acid polypeptide reads, in one-letter code: MAP kinase-interacting serine/threonine-protein kinase 2 (459 aa).

Positions 37-67 are disordered; sequence DFSPQCEARPDMPSSQPIDIPDAKKRGRKKK. A Nuclear localization signal motif is present at residues 60 to 66; it reads KKRGRKK. Residue Ser74 is modified to Phosphoserine. Residues 84 to 368 form the Protein kinase domain; the sequence is QLQEDVLGEG…AAQVLQHPWV (285 aa). Residues 90–98 and Lys113 each bind ATP; that span reads LGEGAHARV. 160-162 serves as a coordination point for staurosporine; that stretch reads EKM. Asp205 (proton acceptor) is an active-site residue. Glu209 serves as a coordination point for staurosporine. A phosphothreonine mark is found at Thr244 and Thr249. Residues Cys299, Cys311, and Cys314 each contribute to the Zn(2+) site. Position 379 is a phosphothreonine (Thr379). Ser431 and Ser434 each carry phosphoserine. The short motif at 438–442 is the MAP kinase binding element; the sequence is LAQRR. Ser446 carries the post-translational modification Phosphoserine. Position 450 is a phosphothreonine (Thr450).

Belongs to the protein kinase superfamily. CAMK Ser/Thr protein kinase family. In terms of assembly, interacts with ESR2 and EIF4E in the nucleus. Monomer. Interacts with the C-terminal regions of EIF4G1 and EIF4G2; this interaction is promoted when MAPK pathways are repressed but repressed upon ERK proteins activation. Also binds to dephosphorylated MAPK3/ERK1 and MAPK1/ERK2. Interaction with phosphorylated MAPK3/ERK1 and MAPK1/ERK2 protects it from dephosphorylation and inactivation. Mg(2+) serves as cofactor. Requires Zn(2+) as cofactor. In terms of processing, dual phosphorylation of Thr-244 and Thr-249 activates the kinase. Phosphorylation of Thr-379 activates the kinase. Phosphorylated upon arsenic trioxide As(2)O(3) treatment. Phosphorylated by MAPK1/ERK2, MAPK11 and MAPK14. Dephosphorylated by PP2A. As to expression, ubiquitously expressed in all tissues examined, with high levels in skeletal muscle and low levels in brain.

It is found in the cytoplasm. The protein localises to the nucleus. The protein resides in the PML body. The enzyme catalyses L-seryl-[protein] + ATP = O-phospho-L-seryl-[protein] + ADP + H(+). It carries out the reaction L-threonyl-[protein] + ATP = O-phospho-L-threonyl-[protein] + ADP + H(+). Its activity is regulated as follows. Inhibited by CGP57380 and staurosporine. Serine/threonine-protein kinase that phosphorylates SFPQ/PSF, HNRNPA1 and EIF4E. May play a role in the response to environmental stress and cytokines. Appears to regulate translation by phosphorylating EIF4E, thus increasing the affinity of this protein for the 7-methylguanosine-containing mRNA cap. Required for mediating PP2A-inhibition-induced EIF4E phosphorylation. Triggers EIF4E shuttling from cytoplasm to nucleus. Enhances the formation of EIF4F complex in pachytene spermatocytes, thus promoting mRNA translation during spermatogenesis. Displays a high basal kinase activity. Acts as a mediator of the suppressive effects of IFNgamma on hematopoiesis. Negative regulator for signals that control generation of arsenic trioxide As(2)O(3)-dependent apoptosis and anti-leukemic responses. Involved in anti-apoptotic signaling in response to serum withdrawal. In Mus musculus (Mouse), this protein is MAP kinase-interacting serine/threonine-protein kinase 2 (Mknk2).